Reading from the N-terminus, the 273-residue chain is 29 kDa ribonucleoprotein A, chloroplastic (273 aa).

The transit peptide at 1 to 58 (MASSASSLHFLSLTPQTLPLPKPTSQTTSLSFFSLPPSSLNLSLSSSSSCFSSRFVRK) directs the protein to the chloroplast. Residues 87–165 (LKIFVGNLPF…RALRVNSGPP (79 aa)) enclose the RRM 1 domain. A disordered region spans residues 156 to 181 (RALRVNSGPPPEKRENSSFRGGSRGG). A linker (Gly-rich) region spans residues 166–187 (PEKRENSSFRGGSRGGGSFDSS). One can recognise an RRM 2 domain in the interval 188–266 (NRVYVGNLAW…RAIRVSPAEA (79 aa)).

It is found in the plastid. The protein localises to the chloroplast. Its function is as follows. Could be involved in splicing and/or processing of chloroplast RNA's. This is 29 kDa ribonucleoprotein A, chloroplastic from Nicotiana sylvestris (Wood tobacco).